The following is a 246-amino-acid chain: Complement C1q tumor necrosis factor-related protein 3 (246 aa).

Positions Met-1–Cys-22 are cleaved as a signal peptide. Positions Gly-51 to Pro-113 constitute a Collagen-like domain. Residues Gln-53–Pro-110 are disordered. The span at Pro-55–Ile-64 shows a compositional bias: pro residues. The segment covering Pro-65 to Asn-74 has biased composition (low complexity). Asn-70 is a glycosylation site (N-linked (GlcNAc...) asparagine). Positions Glu-80–Lys-107 are enriched in basic and acidic residues. The C1q domain occupies Pro-113–Lys-246.

Glycosylated on Asn-70. In terms of tissue distribution, expressed in colon and small intestine.

It localises to the secreted. In Homo sapiens (Human), this protein is Complement C1q tumor necrosis factor-related protein 3 (C1QTNF3).